Reading from the N-terminus, the 216-residue chain is 3-keto-L-gulonate-6-phosphate decarboxylase UlaD (216 aa).

Asp11 contacts substrate. Positions 33 and 62 each coordinate Mg(2+). Arg192 serves as a coordination point for substrate.

The protein belongs to the HPS/KGPDC family. KGPDC subfamily. Homodimer. Requires Mg(2+) as cofactor.

It carries out the reaction 3-dehydro-L-gulonate 6-phosphate + H(+) = L-xylulose 5-phosphate + CO2. Its pathway is cofactor degradation; L-ascorbate degradation; D-xylulose 5-phosphate from L-ascorbate: step 2/4. Functionally, catalyzes the decarboxylation of 3-keto-L-gulonate-6-P into L-xylulose-5-P. Is involved in the anaerobic L-ascorbate utilization. This Escherichia coli O17:K52:H18 (strain UMN026 / ExPEC) protein is 3-keto-L-gulonate-6-phosphate decarboxylase UlaD.